A 585-amino-acid polypeptide reads, in one-letter code: Parathyroid hormone/parathyroid hormone-related peptide receptor (585 aa).

The signal sequence occupies residues 1-26 (MGAARIAPGLALLLCCPVLSSAYALV). Residues 27-184 (DADDVMTKEE…REREVFDRLG (158 aa)) are Extracellular-facing. Cystine bridges form between Cys-48/Cys-113, Cys-104/Cys-144, and Cys-127/Cys-166. Residues 66-100 (DKGWASAPTSGKPRKEKASGKLYPESGEDTGSRHQ) are disordered. Asn-147, Asn-157, Asn-162, and Asn-172 each carry an N-linked (GlcNAc...) asparagine glycan. A helical membrane pass occupies residues 185–208 (MIYTVGYSVSLASLTVAVLILAYF). Residues 209–215 (RRLHCTR) lie on the Cytoplasmic side of the membrane. Residues 216–235 (NYIHMHLFLSFMLRAVSIFV) traverse the membrane as a helical segment. Residues 236–277 (KDAVLYSGATLDEAERLTEEELRAIAQAPLPPVAATSYVGCR) are Extracellular-facing. Residues 278–301 (VAVTFFLYFLATNYYWILVEGLYL) form a helical membrane-spanning segment. Residues 302-315 (HSLIFMAFFSEKKY) are Cytoplasmic-facing. A helical transmembrane segment spans residues 316 to 337 (LWGFTVFGWGLPAIFVAVWVSV). Over 338-356 (RATLANTGCWDLSSGNKKW) the chain is Extracellular. The helical transmembrane segment at 357 to 377 (IIQVPILASIVLNFILFINIV) threads the bilayer. Over 378 to 404 (RVLATKLRETNAGRCDTRQQYRKLLKS) the chain is Cytoplasmic. Residues 405–423 (TLVLMPLFGVHYIVFMATP) form a helical membrane-spanning segment. Over 424–435 (YTEVSGTLWQVQ) the chain is Extracellular. A helical membrane pass occupies residues 436–458 (MHYEMLFNSFQGFFVAIIYCFCN). The Cytoplasmic segment spans residues 459 to 585 (GEVQAEIKKS…LLQEEWETVM (127 aa)). The Important for interaction with G proteins signature appears at 469–472 (WSRW). Thr-543 carries the post-translational modification Phosphothreonine.

It belongs to the G-protein coupled receptor 2 family. As to quaternary structure, homodimer in the absence of bound ligand. Peptide hormone binding leads to dissociation of the homodimer. Post-translationally, N-glycosylated.

It is found in the cell membrane. Functionally, G-protein-coupled receptor for parathyroid hormone (PTH) and for parathyroid hormone-related peptide (PTHLH). Ligand binding causes a conformation change that triggers signaling via guanine nucleotide-binding proteins (G proteins) and modulates the activity of downstream effectors, such as adenylate cyclase (cAMP). PTH1R is coupled to G(s) G alpha proteins and mediates activation of adenylate cyclase activity. PTHLH dissociates from PTH1R more rapidly than PTH; as consequence, the cAMP response induced by PTHLH decays faster than the response induced by PTH. The protein is Parathyroid hormone/parathyroid hormone-related peptide receptor (PTH1R) of Sus scrofa (Pig).